The following is a 30-amino-acid chain: Cyclotide cter-Q (30 aa).

A cross-link (cyclopeptide (Gly-Asn)) is located at residues 1 to 30 (GIPCGESCVFIPCISTVIGCSCKNKVCYRN). 3 disulfides stabilise this stretch: cysteine 4–cysteine 20, cysteine 8–cysteine 22, and cysteine 13–cysteine 27.

Post-translationally, this is a cyclic peptide.

It is found in the secreted. Probably participates in a plant defense mechanism. The chain is Cyclotide cter-Q from Clitoria ternatea (Butterfly pea).